The chain runs to 118 residues: Non-specific lipid-transfer protein 5 (118 aa).

Residues 1–25 (MEGLLKLSTLVIVCMLVTAPMASEA) form the signal peptide. 4 disulfides stabilise this stretch: C29/C76, C39/C53, C54/C100, and C74/C114.

It belongs to the plant LTP family.

In terms of biological role, plant non-specific lipid-transfer proteins transfer phospholipids as well as galactolipids across membranes. May play a role in wax or cutin deposition in the cell walls of expanding epidermal cells and certain secretory tissues. The sequence is that of Non-specific lipid-transfer protein 5 (LTP5) from Arabidopsis thaliana (Mouse-ear cress).